The primary structure comprises 935 residues: Coiled-coil domain-containing protein 66 (935 aa).

Over residues 76–96 (LDTSQAKPENSRLTFSPSTDK) the composition is skewed to polar residues. The tract at residues 76-103 (LDTSQAKPENSRLTFSPSTDKQYSEKDS) is disordered. Thr114 carries the post-translational modification Phosphothreonine. At Ser366 the chain carries Phosphoserine. Positions 462–555 (LEHQKAIMAQ…EQRIRELAQK (94 aa)) form a coiled coil. 3 disordered regions span residues 470–491 (AQVE…KEEQ), 577–602 (TISS…DTGV), and 738–794 (ENLS…RTQQ). A compositionally biased stretch (basic and acidic residues) spans 473-491 (EENRRKKRLEEEQRKKEEQ). Residues 567–935 (GAQVDYKAFT…NQEDNFSSSF (369 aa)) are mediates localization to cilia, centrosomes and spindle microtubules and the interaction with PCM1, CEP290, CEP104 and CSPP1. Residues 590 to 602 (DTSTASPKKDTGV) show a composition bias toward polar residues. Ser595 carries the phosphoserine modification. Residues 752 to 782 (SHRETESESRLHLIKKVEEPLKTPSVSKERF) are compositionally biased toward basic and acidic residues. Residues 783–794 (QTSPAVKNRTQQ) are compositionally biased toward polar residues.

Homodimer; disulfide-linked. Interacts with CEP290. Interacts with PCM1. Interacts with ARMC9, TOGARAM1, CSPP1 and CEP104. Interacts with CDK5RAP2, CEP152, CEP192, TBG1 and PRC1. As to expression, widely expressed. Expressed in retina by rod photoreceptors but also detected in outer plexiform and ganglion cell layers (at protein level).

Its subcellular location is the cytoplasm. It is found in the cytoskeleton. It localises to the microtubule organizing center. The protein localises to the centrosome. The protein resides in the centriolar satellite. Its subcellular location is the cell projection. It is found in the cilium. It localises to the cilium basal body. The protein localises to the cilium axoneme. The protein resides in the photoreceptor inner segment. Its subcellular location is the photoreceptor outer segment. Its function is as follows. Microtubule-binding protein required for ciliogenesis. May function in ciliogenesis by mediating the transport of proteins like BBS4 to the cilium, but also through the organization of the centriolar satellites. Required for the assembly of signaling-competent cilia with proper structure and length. Mediates this function in part by regulating transition zone assembly and basal body recruitment of the IFT-B complex. Cooperates with the ciliopathy proteins CSPP1 and CEP104 during cilium length regulation. Plays two important roles during cell division. First, is required for mitotic progression via regulation of spindle assembly, organization and orientation, levels of spindle microtubules (MTs), kinetochore-fiber integrity, and chromosome alignment. Second, functions during cytokinesis in part by regulating assembly and organization of central spindle and midbody MTs. Plays a role in retina morphogenesis and/or homeostasis. The chain is Coiled-coil domain-containing protein 66 from Mus musculus (Mouse).